The primary structure comprises 464 residues: Olfactomedin (464 aa).

The first 16 residues, 1–16, serve as a signal peptide directing secretion; it reads MYICLLTLVLIHAAAA. Residues N21, N85, N143, N228, N279, and N383 are each glycosylated (N-linked (GlcNAc...) asparagine). The 273-residue stretch at 192-464 folds into the Olfactomedin-like domain; sequence SCQHQGLAHI…LLHYDIALKP (273 aa). A disulfide bridge connects residues C193 and C394.

In terms of assembly, oligomer; disulfide-linked. Post-translationally, most, if not all, of the six potential sites for N-glycosylation carry carbohydrate moieties of 8-10 sugar residues. In terms of tissue distribution, expressed exclusively in olfactory neuroepithelium.

The protein resides in the secreted. Its subcellular location is the extracellular space. Functionally, may influence the maintenance, growth, or differentiation of chemosensory cilia on the apical dendrites of olfactory neurons. Major component of the extracellular matrix of the olfactory neuroepithelium. This chain is Olfactomedin, found in Aquarana catesbeiana (American bullfrog).